A 130-amino-acid polypeptide reads, in one-letter code: Small ribosomal subunit protein uS8 (130 aa).

The protein belongs to the universal ribosomal protein uS8 family. Part of the 30S ribosomal subunit. Contacts proteins S5 and S12.

One of the primary rRNA binding proteins, it binds directly to 16S rRNA central domain where it helps coordinate assembly of the platform of the 30S subunit. The protein is Small ribosomal subunit protein uS8 of Psychromonas ingrahamii (strain DSM 17664 / CCUG 51855 / 37).